A 458-amino-acid polypeptide reads, in one-letter code: Sulfite efflux pump SSU1 (458 aa).

The Cytoplasmic portion of the chain corresponds to 1 to 11; that stretch reads MVANWVLALTR. A helical membrane pass occupies residues 12-32; sequence QFDPFMFMMVMGVGISSNILY. Over 33–48 the chain is Extracellular; the sequence is SFPYPARWLRICSYIM. The chain crosses the membrane as a helical span at residues 49-69; sequence FAIACLIFIAVQALQILHLIV. Residues 70-89 are Cytoplasmic-facing; it reads YIKEKSFREYFNDFFRNMKH. Residues 90-110 form a helical membrane-spanning segment; that stretch reads NLFWGTYPMGLVTIINFLGAL. Topologically, residues 111–135 are extracellular; that stretch reads SKANTTKSPTNARNLMIFVYVLWWY. Residues 136 to 156 traverse the membrane as a helical segment; that stretch reads DLAVCLVIAWGISFLIWHDYY. Residues 157-176 are Cytoplasmic-facing; sequence PLEGIGNYPSYNIKMASENM. The helical transmembrane segment at 177 to 197 threads the bilayer; sequence KSVLLLDIIPLVVVASSCGTF. The Extracellular segment spans residues 198–220; that stretch reads TMSEIFFHAFNRNIQLITLVICA. A helical membrane pass occupies residues 221–241; that stretch reads LTWLHAIIFVFILIAIYFWSL. Residues 242-252 are Cytoplasmic-facing; the sequence is YINKIPPMTQV. A helical transmembrane segment spans residues 253-275; that stretch reads FTLFLLLGPMGQGSFGVLLLTDN. Over 276–309 the chain is Extracellular; the sequence is IKKYAGKYYPTDNITREQEILTIAVPWCFKILGM. A helical membrane pass occupies residues 310–330; it reads VSAMALLAMGYFFTVISVVSI. Residues 331 to 350 are Cytoplasmic-facing; the sequence is LSYYNKKEIENETGKVKRVY. Residues 351–371 form a helical membrane-spanning segment; sequence TFHKGFWGMTFPMGTMSLGNE. Residues 372–387 lie on the Extracellular side of the membrane; it reads ELYVQYNQYVPLYAFR. A helical transmembrane segment spans residues 388–408; the sequence is VLGTIYGGVCVCWSILCLLCT. The Cytoplasmic portion of the chain corresponds to 409-458; it reads LHEYSKKMLHAARKSSLFSESGTEKTTVSPYNSIESVEESNSALDFTRLA. 3 positions are modified to phosphoserine: S444, S448, and S450.

The protein belongs to the tellurite-resistance/dicarboxylate transporter (TDT) family.

It is found in the cell membrane. Functionally, involved in efflux of free sulfite. Mutations in the SSU1 gene cause sensitivity to sulfite. The sequence is that of Sulfite efflux pump SSU1 (SSU1) from Saccharomyces cerevisiae (strain ATCC 204508 / S288c) (Baker's yeast).